A 697-amino-acid polypeptide reads, in one-letter code: Elongation factor G (697 aa).

A tr-type G domain is found at 8–283; it reads EHIRNIGICA…AVVDFLPSPT (276 aa). GTP is bound by residues 17-24, 81-85, and 135-138; these read AHIDAGKT, DTPGH, and NKMD.

The protein belongs to the TRAFAC class translation factor GTPase superfamily. Classic translation factor GTPase family. EF-G/EF-2 subfamily.

It is found in the cytoplasm. Functionally, catalyzes the GTP-dependent ribosomal translocation step during translation elongation. During this step, the ribosome changes from the pre-translocational (PRE) to the post-translocational (POST) state as the newly formed A-site-bound peptidyl-tRNA and P-site-bound deacylated tRNA move to the P and E sites, respectively. Catalyzes the coordinated movement of the two tRNA molecules, the mRNA and conformational changes in the ribosome. This is Elongation factor G from Rickettsia rhipicephali.